The sequence spans 317 residues: Ricin B-like lectin EULS3 (317 aa).

The segment covering 1–11 (MEHHHQHHRHH) has biased composition (basic residues). A disordered region spans residues 1 to 157 (MEHHHQHHRH…YHKPDENRLP (157 aa)). The span at 25-36 (VPPPHVDAPPQP) shows a compositional bias: pro residues. A compositionally biased stretch (polar residues) spans 136–146 (HSSNQPQSSSG). The 148-residue stretch at 168–315 (TVKVYSKAEP…KGDNQLWKIF (148 aa)) folds into the Ricin B-type lectin domain.

As to quaternary structure, interacts (via N-terminus) with ATS3A and ATS3B. As to expression, expressed in roots, rosette leaves, stems, cauline leaves and flowers.

Its subcellular location is the nucleus. The protein resides in the cytoplasm. Its function is as follows. Lectin which binds carbohydrates in vitro. Interacts through its lectin domain with glycan structures containing one or more Lewis X, Lewis Y or lactosamine motifs. May play a role in abiotic stress responses. May play a role in abscisic acid-induced stomatal closure. May play a role in disease resistance against Pseudomonas syringae through its involvement in stomatal movement. The chain is Ricin B-like lectin EULS3 from Arabidopsis thaliana (Mouse-ear cress).